Here is a 365-residue protein sequence, read N- to C-terminus: Mitogen-activated protein kinase 13 (365 aa).

Positions 25–308 constitute a Protein kinase domain; the sequence is YVSPTHVGSG…AAQALTHPFF (284 aa). 31–39 is an ATP binding site; the sequence is VGSGAYGSV. Ser-47 carries the phosphoserine modification. Lys-54 is a binding site for ATP. Asp-150 serves as the catalytic Proton acceptor. Residue Thr-180 is modified to Phosphothreonine; by MAP2K3, MAP2K4, MAP2K6 and MAP2K7. The short motif at 180–182 is the TXY element; that stretch reads TGY. Tyr-182 bears the Phosphotyrosine; by MAP2K3, MAP2K4, MAP2K6 and MAP2K7 mark. The residue at position 350 (Ser-350) is a Phosphoserine.

It belongs to the protein kinase superfamily. CMGC Ser/Thr protein kinase family. MAP kinase subfamily. In terms of assembly, interacts with MAPK8IP2. It depends on Mg(2+) as a cofactor. In terms of processing, dually phosphorylated on Thr-180 and Tyr-182 by MAP2K3/MKK3, MAP2K4/MKK4, MAP2K6/MKK6 and MAP2K7/MKK7, which activates the enzyme. Dephosphorylated by dual specificity phosphatase DUSP1. In terms of tissue distribution, expressed in testes, pancreas, small intestine, lung and kidney. Abundant in macrophages, also present in neutrophils, CD4+ T-cells, and endothelial cells.

The enzyme catalyses L-seryl-[protein] + ATP = O-phospho-L-seryl-[protein] + ADP + H(+). It catalyses the reaction L-threonyl-[protein] + ATP = O-phospho-L-threonyl-[protein] + ADP + H(+). With respect to regulation, activated by phosphorylation on threonine and tyrosine by dual specificity kinases, MAP2K3/MKK3, MAP2K6/MKK6, MAP2K4/MKK4 and MAP2K7/MKK7. Activation by ultraviolet radiation, hyperosmotic shock, anisomycin or by TNF-alpha is mediated by MAP2K3/MKK3. Inhibited by dual specificity phosphatase DUSP1. In terms of biological role, serine/threonine kinase which acts as an essential component of the MAP kinase signal transduction pathway. MAPK13 is one of the four p38 MAPKs which play an important role in the cascades of cellular responses evoked by extracellular stimuli such as pro-inflammatory cytokines or physical stress leading to direct activation of transcription factors such as ELK1 and ATF2. Accordingly, p38 MAPKs phosphorylate a broad range of proteins and it has been estimated that they may have approximately 200 to 300 substrates each. MAPK13 is one of the less studied p38 MAPK isoforms. Some of the targets are downstream kinases such as MAPKAPK2, which are activated through phosphorylation and further phosphorylate additional targets. Plays a role in the regulation of protein translation by phosphorylating and inactivating EEF2K. Involved in cytoskeletal remodeling through phosphorylation of MAPT and STMN1. Mediates UV irradiation induced up-regulation of the gene expression of CXCL14. Plays an important role in the regulation of epidermal keratinocyte differentiation, apoptosis and skin tumor development. Phosphorylates the transcriptional activator MYB in response to stress which leads to rapid MYB degradation via a proteasome-dependent pathway. MAPK13 also phosphorylates and down-regulates PRKD1 during regulation of insulin secretion in pancreatic beta cells. In Homo sapiens (Human), this protein is Mitogen-activated protein kinase 13 (MAPK13).